A 398-amino-acid polypeptide reads, in one-letter code: 1-deoxy-D-xylulose 5-phosphate reductoisomerase (398 aa).

Residues Thr-10, Gly-11, Ser-12, Ile-13, Gly-36, Lys-37, Asn-38, and Asn-124 each coordinate NADPH. Lys-125 contributes to the 1-deoxy-D-xylulose 5-phosphate binding site. Glu-126 provides a ligand contact to NADPH. Residue Asp-150 coordinates Mn(2+). Ser-151, Glu-152, Ser-186, and His-209 together coordinate 1-deoxy-D-xylulose 5-phosphate. Glu-152 contacts Mn(2+). An NADPH-binding site is contributed by Gly-215. Positions 222, 227, 228, and 231 each coordinate 1-deoxy-D-xylulose 5-phosphate. Glu-231 lines the Mn(2+) pocket.

The protein belongs to the DXR family. As to quaternary structure, homodimer. The cofactor is Mg(2+). Mn(2+) serves as cofactor.

The enzyme catalyses 2-C-methyl-D-erythritol 4-phosphate + NADP(+) = 1-deoxy-D-xylulose 5-phosphate + NADPH + H(+). Its pathway is isoprenoid biosynthesis; isopentenyl diphosphate biosynthesis via DXP pathway; isopentenyl diphosphate from 1-deoxy-D-xylulose 5-phosphate: step 1/6. Functionally, catalyzes the NADPH-dependent rearrangement and reduction of 1-deoxy-D-xylulose-5-phosphate (DXP) to 2-C-methyl-D-erythritol 4-phosphate (MEP). The protein is 1-deoxy-D-xylulose 5-phosphate reductoisomerase of Shigella flexneri.